A 168-amino-acid polypeptide reads, in one-letter code: Histone doublet miniH2B-H2A (168 aa).

The protein localises to the host nucleus. It is found in the host cytoplasm. It localises to the virion. Histone-like protein that is recruited to viral factories during viral replication and participates in viral DNA packaging and virion production probably by forming unstable nucleosome-like particles. May compact the viral DNA. This chain is Histone doublet miniH2B-H2A, found in Melbournevirus (MelV).